The following is a 283-amino-acid chain: Prolyl 4-hydroxylase 1 (283 aa).

At 1–6 (MAPAMK) the chain is on the cytoplasmic side. Residues 7-27 (IVFGLLTFVTVGMVIGSLLQL) traverse the membrane as a helical; Signal-anchor for type II membrane protein segment. The Lumenal portion of the chain corresponds to 28 to 283 (AFINRLEDSY…TKWMRQKATS (256 aa)). The 118-residue stretch at 162–279 (NGELIQVLRY…KWSATKWMRQ (118 aa)) folds into the Fe2OG dioxygenase domain. Residues H180, D182, and H260 each coordinate Fe cation. K270 contacts 2-oxoglutarate.

This sequence belongs to the P4HA family. The cofactor is Fe(2+). L-ascorbate is required as a cofactor.

The protein resides in the endoplasmic reticulum membrane. The enzyme catalyses L-prolyl-[collagen] + 2-oxoglutarate + O2 = trans-4-hydroxy-L-prolyl-[collagen] + succinate + CO2. Catalyzes the post-translational formation of 4-hydroxyproline in -Xaa-Pro-Gly- sequences in proline-rich peptide sequences of plant glycoproteins and other proteins. Hydroxylates preferentially prolines in second positions in the -Pro-Pro-Gly-triplets. Hydroxyprolines are important constituent of many plant cell wall glycoproteins such as extensins, hydroxyproline-rich glycoproteins, lectins and arabinogalactan proteins. Can hydroxylate collagen-like peptides and hypoxia-inducible transcription factor peptides. The chain is Prolyl 4-hydroxylase 1 from Arabidopsis thaliana (Mouse-ear cress).